A 578-amino-acid chain; its full sequence is Leucine-rich repeat-containing protein 15 (578 aa).

The first 21 residues, 1-21 (MPLKHYLLLLVGCQAWALGLA), serve as a signal peptide directing secretion. The LRRNT domain occupies 22–53 (YYGCPSECTCSRASQVECTGARIVAMPTPLPW). The Extracellular segment spans residues 22–535 (YYGCPSECTC…TWGMTEAQSG (514 aa)). 15 LRR repeats span residues 54 to 75 (NAMSLQVVNTHITELPENLFLN), 78 to 99 (ALIALKMEKNELSTIMPGAFRN), 102 to 123 (SLRYLSLANNKLRMLPIRVFQD), 126 to 147 (NLESLLLSNNQLVQIQPAQFSQ), 150 to 171 (NLRELQLHGNNLESIPEEAFDH), 174 to 195 (GLTKLNLGRNSFTHLSPRLFQH), 198 to 219 (NLQVLRLHENRLSDIPMGTFDA), 222 to 243 (NLQELALQENQIGTLSPGLFHN), 246 to 267 (NLQRLYLSNNHISQLPPGIFMQ), 270 to 291 (QLNKLTLFGNSLRELSPGVFGP), 294 to 315 (NLRELWLYNNHITSLADNTFSH), 318 to 339 (QLQVLILSHNQLTYISPGAFNG), 342 to 363 (NLRELSLHTNALQDLDSNVFRS), 366 to 387 (NLQNISLQSNRLRQLPGSIFAN), and 390 to 411 (GLTTIQLQNNNLENLPLGIFDH). The N-linked (GlcNAc...) asparagine glycan is linked to Asn75. The N-linked (GlcNAc...) asparagine glycan is linked to Asn369. In terms of domain architecture, LRRCT spans 423–473 (NPWRCDSDILPLHNWLLLNRARLGTDTLPVCSSPANVRGQSLVIININFPG). A disordered region spans residues 476 to 500 (VQGPETPEVPSYPDTPSYPDTTSVS). Residues 536-556 (LAIAAIVIGIIALACSLAACI) form a helical membrane-spanning segment. The Cytoplasmic portion of the chain corresponds to 557-578 (CCCCCKKRSQAVLMQMKAPNEC).

It localises to the cell membrane. In Rattus norvegicus (Rat), this protein is Leucine-rich repeat-containing protein 15 (Lrrc15).